The following is a 408-amino-acid chain: MKQESSFLAKLANGSLVLQILVGIIAGVSLASFSHEAAKQVAFLGSLFVGALKAIAPILVFILVASSIANQKKNTQTNMRPIVVLYLFGTFAAALTAVLLSMMFPTNLVLVAGVEGTSPPQGIGEVLNTLLFKLVDNPVNALMTGNYIGILAWGVGLGLALHHASDSTKQVFADVSHGISQMVRFIIRLAPIGIFGLVAATFAETGFAAIAGYAKLLAVLLGAMAIIALIVNPLIVYVKIKRNPYPLVIRCLRESGVTAFFTRSSAANIPVNMALCEKLKLHEDTYSVSIPLGATINMGGAAITITVLTLAAAHTLGIQVDLLTALLLSVVAAISACGASGVAGGSLLLIPLACSLFGISNDVAMQVVAVGFIIGVIQDAAETALNSSTDVIFTAAACEAAENKAKLG.

The next 9 membrane-spanning stretches (helical) occupy residues 11–31 (LANG…VSLA), 43–63 (FLGS…VFIL), 82–102 (IVVL…LLSM), 141–161 (ALMT…GLAL), 192–212 (IGIF…AIAG), 216–236 (LLAV…PLIV), 290–310 (IPLG…VLTL), 316–336 (LGIQ…AISA), and 363–383 (VAMQ…AAET).

It belongs to the dicarboxylate/amino acid:cation symporter (DAACS) (TC 2.A.23) family.

It localises to the cell inner membrane. It catalyses the reaction L-serine(in) + Na(+)(in) = L-serine(out) + Na(+)(out). The catalysed reaction is L-threonine(in) + Na(+)(in) = L-threonine(out) + Na(+)(out). Involved in the import of serine and threonine into the cell, with the concomitant import of sodium (symport system). In Shewanella sp. (strain MR-4), this protein is Serine/threonine transporter SstT.